The primary structure comprises 289 residues: Serine/threonine-protein phosphatase Pgam5, mitochondrial (289 aa).

A helical membrane pass occupies residues 7–23; sequence FACGTGAGLAAYYLQKL.

It belongs to the phosphoglycerate mutase family. BPG-dependent PGAM subfamily. As to quaternary structure, interacts with Pk92B/ASK1.

Its subcellular location is the mitochondrion outer membrane. The catalysed reaction is O-phospho-L-seryl-[protein] + H2O = L-seryl-[protein] + phosphate. The enzyme catalyses O-phospho-L-threonyl-[protein] + H2O = L-threonyl-[protein] + phosphate. Functionally, displays phosphatase activity for serine/threonine residues, and dephosphorylates and activates Pk92B kinase. Has apparently no phosphoglycerate mutase activity. In Drosophila virilis (Fruit fly), this protein is Serine/threonine-protein phosphatase Pgam5, mitochondrial.